The sequence spans 357 residues: S-adenosyl-L-methionine:benzoic acid/salicylic acid carboxyl methyltransferase 3 (357 aa).

Residue Y18 coordinates S-adenosyl-L-homocysteine. Q25 is a benzoate binding site. Residues C59, N64, D96, L97, S135, and F136 each contribute to the S-adenosyl-L-homocysteine site. Residue W157 participates in benzoate binding. N168, D254, F256, and N257 together coordinate Mg(2+). Q260 contacts benzoate.

Belongs to the methyltransferase superfamily. Type-7 methyltransferase family.

It catalyses the reaction benzoate + S-adenosyl-L-methionine = methyl benzoate + S-adenosyl-L-homocysteine. It functions in the pathway aromatic compound metabolism. Functionally, converts benzoic acid into the volatile ester methyl benzoates. This scent, mostly produced in a rhythmical, diurnal manner, attracts the pollinators. The sequence is that of S-adenosyl-L-methionine:benzoic acid/salicylic acid carboxyl methyltransferase 3 from Petunia hybrida (Petunia).